The primary structure comprises 414 residues: MNPTLGLAIFLAVLLTVKGLLKPSFSPRNYKALSEVQGWKQRMAAKELARQNMDLGFKLLKKLAFYNPGRNIFLSPLSISTAFSMLCLGAQDSTLDEIKQGFNFRKMPEKDLHEGFHYIIHELTQKTQDLKLSIGNTLFIDQRLQPQRKFLEDAKNFYSAETILTNFQNLEMAQKQINDFISQKTHGKINNLIENIDPGTVMLLANYIFFRARWKHEFDPNVTKEEDFFLEKNSSVKVPMMFRSGIYQVGYDDKLSCTILEIPYQKNITAIFILPDEGKLKHLEKGLQVDTFSRWKTLLSRRVVDVSVPRLHMTGTFDLKKTLSYIGVSKIFEEHGDLTKIAPHRSLKVGEAVHKAELKMDERGTEGAAGTGAQTLPMETPLVVKIDKPYLLLIYSEKIPSVLFLGKIVNPIGK.

The first 20 residues, 1–20 (MNPTLGLAIFLAVLLTVKGL), serve as a signal peptide directing secretion. 2 N-linked (GlcNAc...) (complex) asparagine glycosylation sites follow: Asn-221 and Asn-233. N-linked (GlcNAc...) (high mannose) asparagine glycosylation occurs at Asn-267. Residues 364–382 (GTEGAAGTGAQTLPMETPL) form a reactive center loop region.

This sequence belongs to the serpin family. As to quaternary structure, forms a stable complex with KLK7. In terms of processing, glycosylation slightly decreases affinity for heparin, but otherwise has no significant effect on KLK7 inhibitory activity or thermal stability of the protein. As to expression, expressed in visceral adipose tissues.

Its subcellular location is the secreted. Its activity is regulated as follows. Inhibition of KLK7 is enhanced by heparin. Its function is as follows. Adipokine that modulates insulin action by specifically inhibiting its target protease KLK7 in white adipose tissues. This Homo sapiens (Human) protein is Serpin A12 (SERPINA12).